Reading from the N-terminus, the 196-residue chain is Probable GTP-binding protein EngB (196 aa).

The EngB-type G domain occupies 21-195 (DVSEICLIGR…YELIDKLLGS (175 aa)). GTP contacts are provided by residues 29–36 (GRSNVGKS), 56–60 (GKTRL), 75–78 (DAPG), 142–145 (TKLD), and 174–176 (ISN). Residues serine 36 and threonine 58 each coordinate Mg(2+).

The protein belongs to the TRAFAC class TrmE-Era-EngA-EngB-Septin-like GTPase superfamily. EngB GTPase family. Mg(2+) is required as a cofactor.

Its function is as follows. Necessary for normal cell division and for the maintenance of normal septation. The polypeptide is Probable GTP-binding protein EngB (Mycoplasma mycoides subsp. mycoides SC (strain CCUG 32753 / NCTC 10114 / PG1)).